A 792-amino-acid chain; its full sequence is Terminal nucleotidyltransferase 4A (792 aa).

Residues Gly-55–Glu-191 are disordered. Composition is skewed to low complexity over residues Ala-80 to Glu-97 and Ser-105 to Gly-139. Residues Asp-297 and Asp-299 each coordinate Mg(2+). ATP contacts are provided by Gly-360, Lys-385, Ser-403, and Tyr-404. Positions Asn-428–Pro-486 constitute a PAP-associated domain. ATP is bound by residues Asn-488 and Arg-492. Over residues Gln-601–Asp-619 the composition is skewed to low complexity. Disordered stretches follow at residues Gln-601–Val-632 and Met-737–Arg-792. A compositionally biased stretch (gly residues) spans Thr-744–Gly-756. Residues Arg-764 to His-781 show a composition bias toward basic residues.

Belongs to the DNA polymerase type-B-like family. As to quaternary structure, component of a nuclear TRAMP-like complex, an ATP-dependent exosome regulatory complex consisting of a helicase (MTREX), an oligadenylate polymerase (TENT4B or TENT4A), and a substrate specific RNA-binding factor (ZCCHC7 or ZCCHC8). Several TRAMP-like complexes exist with specific compositions and are associated with nuclear, or nucleolar RNA exosomes. It depends on Mg(2+) as a cofactor. Mn(2+) is required as a cofactor.

The protein resides in the cytoplasm. It is found in the nucleus. The protein localises to the nucleoplasm. The enzyme catalyses RNA(n) + ATP = RNA(n)-3'-adenine ribonucleotide + diphosphate. Functionally, terminal nucleotidyltransferase that catalyzes preferentially the transfer of ATP and GTP on RNA 3' poly(A) tail creating a heterogeneous 3' poly(A) tail leading to mRNAs stabilization by protecting mRNAs from active deadenylation. Also functions as a catalytic subunit of a TRAMP-like complex which has a poly(A) RNA polymerase activity and is involved in a post-transcriptional quality control mechanism. Polyadenylation with short oligo(A) tails is required for the degradative activity of the exosome on several of its nuclear RNA substrates. Has no terminal uridylyltransferase activity, and does not play a role in replication-dependent histone mRNA degradation via uridylation. In Homo sapiens (Human), this protein is Terminal nucleotidyltransferase 4A.